Reading from the N-terminus, the 380-residue chain is Cytochrome b (380 aa).

The next 4 membrane-spanning stretches (helical) occupy residues 34–54, 78–99, 114–134, and 179–199; these read FGSLLGVCLIAQIATGLFLAM, WLLRNLHANGASFFFICIYFHI, WNIGVILLFLVMATAFVGYVL, and FFTFHFILPFIIAAASMINLL. The heme b site is built by His84 and His98. His183 is a heme b binding site. His202 serves as a coordination point for a ubiquinone. Transmembrane regions (helical) follow at residues 227 to 247, 289 to 309, 321 to 341, and 348 to 368; these read YKDLLGFVIMLGALASLSTFA, LGGVLALLLSIMILFLMPIIH, IAKTFFWALIANTAILTWIGG, and FITIGQIASGLYFLIFVLLIP.

This sequence belongs to the cytochrome b family. The cytochrome bc1 complex contains 3 respiratory subunits (MT-CYB, CYC1 and UQCRFS1), 2 core proteins (UQCRC1 and UQCRC2) and probably 6 low-molecular weight proteins. Heme b is required as a cofactor.

The protein resides in the mitochondrion inner membrane. Component of the ubiquinol-cytochrome c reductase complex (complex III or cytochrome b-c1 complex) that is part of the mitochondrial respiratory chain. The b-c1 complex mediates electron transfer from ubiquinol to cytochrome c. Contributes to the generation of a proton gradient across the mitochondrial membrane that is then used for ATP synthesis. In Pelophylax plancyi (Korean pond frog), this protein is Cytochrome b (mt-cyb).